Here is a 535-residue protein sequence, read N- to C-terminus: Estrogen receptor (535 aa).

The disordered stretch occupies residues 1-21; it reads SRMLTDPPRIGSMQSLGSSPT. Positions 1 to 104 are modulating; it reads SRMLTDPPRI…VFEMANETRY (104 aa). Over residues 12-21 the composition is skewed to polar residues; sequence SMQSLGSSPT. 2 consecutive NR C4-type zinc fingers follow at residues 105–125 and 141–165; these read CAVC…CEGC and CPAT…LRKC. Positions 105–170 form a DNA-binding region, nuclear receptor; that stretch reads CAVCSDFASG…RLRKCYEVGM (66 aa). The hinge stretch occupies residues 171–236; that stretch reads VKGGLRKDRG…GGWCGPRITM (66 aa). Residues 187-229 form a disordered region; that stretch reads DKRYCGPAGDREKPYGDLEHRTAPPQDGGRNSSSSSLSGGGGW. Basic and acidic residues predominate over residues 195 to 208; it reads GDREKPYGDLEHRT. Positions 214 to 223 are enriched in low complexity; that stretch reads GGRNSSSSSL. The NR LBD domain occupies 237–473; the sequence is PPEQVLFLLQ…DLLLEMLDGH (237 aa). Residues 478-535 form a disordered region; the sequence is PGKVAQAGEQTEGPSTTTTTSTGSSIGPMRGSQDTHIRSPGSGVLQYGSPSSDQMPIP. Residues 492-502 show a composition bias toward low complexity; the sequence is STTTTTSTGSS. Residues 525–535 show a composition bias toward polar residues; that stretch reads GSPSSDQMPIP.

Belongs to the nuclear hormone receptor family. NR3 subfamily. In terms of assembly, binds DNA as a homodimer. Can form a heterodimer with ER-beta. In terms of tissue distribution, highest expression in brain and liver.

Its subcellular location is the nucleus. The steroid hormones and their receptors are involved in the regulation of eukaryotic gene expression and affect cellular proliferation and differentiation in target tissues. The protein is Estrogen receptor (esr1) of Salmo salar (Atlantic salmon).